Consider the following 427-residue polypeptide: MFFTCGPNEAMVVSGFCRSPPVMVAGGRVFVLPCIQQIQRISLNTLTLNVKSEKVYTRHGVPISVTGIAQVKIQGQNKEMLAAACQMFLGKTEAEIAHIALETLEGHQRAIMAHMTVEEIYKDRQKFSEQVFKVASSDLVNMGISVVSYTLKDIHDDQDYLHSLGKARTAQVQKDARIGEAEAKRDAGIREAKAKQEKVSAQYLSEIEMAKAQRDYELKKAAYDIEVNTRRAQADLAYQLQVAKTKQQIEEQRVQVQVVERAQQVAVQEQEIARREKELEARVRKPAEAERYKLERLAEAEKSQLIMQAEAEAESVRMRGEAEAFAIGARARAEAEQMAKKAEAFQLYQEAAQLDMLLEKLPQVAEEISGPLTSANKITLVSSGSGTMGAAKVTGEVLDILTRLPESVERLTGVSISQVNHKPLRTA.

A phosphoserine mark is found at Ser-19, Ser-163, and Ser-385. Position 387 is a phosphothreonine (Thr-387).

This sequence belongs to the band 7/mec-2 family. Flotillin subfamily. In terms of assembly, heterooligomeric complex of flotillin-1 and flotillin-2 and caveolin-1 and caveolin-2. Interacts with ECPAS.

Its subcellular location is the cell membrane. It localises to the endosome. It is found in the membrane. The protein localises to the caveola. The protein resides in the melanosome. Its subcellular location is the membrane raft. Its function is as follows. May act as a scaffolding protein within caveolar membranes, functionally participating in formation of caveolae or caveolae-like vesicles. The chain is Flotillin-1 (FLOT1) from Macaca mulatta (Rhesus macaque).